We begin with the raw amino-acid sequence, 186 residues long: Golgi apparatus membrane protein-like protein ECHIDNA (186 aa).

Position 1 is an N-acetylmethionine (Met-1). The next 3 helical transmembrane spans lie at 35–55 (ILSALFFNSFVIIFVVTVLLA), 108–128 (FWWTLYLAAAAWFILGVFSLI), and 132–152 (ADYLLVVGVCLSLNVANIIGF).

This sequence belongs to the TVP23 family. In terms of assembly, component of a trans-Golgi network (TGN)-localized ECH/YIP4 complex made of ECH, YIP4A and YIP4B. Interacts directly with YIP4A and YIP4B.

The protein localises to the golgi apparatus. The protein resides in the trans-Golgi network membrane. It localises to the early endosome membrane. Its function is as follows. Mediates trans-Golgi-network trafficking and cell elongation. Required for keeping the appropriate balance between secretory trafficking and vacuolar targeting of a subset of proteins. The ECH/YIP4 complex is involved in the modulation of the trans-Golgi network (TGN)-mediated trafficking of some proteins and cell wall components (e.g. pectin and hemicellulose) to the cell wall in dark-grown hypocotyls and in secretory cells of the seed coat. This chain is Golgi apparatus membrane protein-like protein ECHIDNA, found in Arabidopsis thaliana (Mouse-ear cress).